The following is a 50-amino-acid chain: Photosystem II reaction center protein K (50 aa).

The propeptide occupies 1-13 (MLNLNFTNITVMG). The helical transmembrane segment at 25 to 45 (IVDILPIIPILFFLLAFVWQA) threads the bilayer.

This sequence belongs to the PsbK family. As to quaternary structure, PSII is composed of 1 copy each of membrane proteins PsbA, PsbB, PsbC, PsbD, PsbE, PsbF, PsbH, PsbI, PsbJ, PsbK, PsbL, PsbM, PsbT, PsbY, PsbZ, Psb30/Ycf12, at least 3 peripheral proteins of the oxygen-evolving complex and a large number of cofactors. It forms dimeric complexes.

It localises to the plastid. Its subcellular location is the chloroplast thylakoid membrane. In terms of biological role, one of the components of the core complex of photosystem II (PSII). PSII is a light-driven water:plastoquinone oxidoreductase that uses light energy to abstract electrons from H(2)O, generating O(2) and a proton gradient subsequently used for ATP formation. It consists of a core antenna complex that captures photons, and an electron transfer chain that converts photonic excitation into a charge separation. In Euglena myxocylindracea, this protein is Photosystem II reaction center protein K.